Reading from the N-terminus, the 480-residue chain is Coronin-2B (480 aa).

WD repeat units follow at residues 85 to 125, 135 to 177, 179 to 217, 220 to 263, and 265 to 308; these read GHQG…LKRN, GHSR…KMID, HTDV…VLQE, CKNH…MPMI, and EEID…PYLS. Residues 436–479 are a coiled coil; the sequence is NELLRMFFRQQDEIRRLKEELAQKDIRLRQLQLELKNLRNNPKN.

It belongs to the WD repeat coronin family. In terms of assembly, binds to F-actin and to vinculin.

Its subcellular location is the cytoplasm. It is found in the cytoskeleton. Functionally, may play a role in the reorganization of neuronal actin structure. The sequence is that of Coronin-2B (Coro2b) from Mus musculus (Mouse).